A 426-amino-acid chain; its full sequence is Serine--tRNA ligase (426 aa).

Thr-227–Glu-229 lines the L-serine pocket. Residues Arg-258–Glu-260 and Val-274 each bind ATP. Glu-281 is an L-serine binding site. Glu-345 to Ser-348 is a binding site for ATP. Residue Thr-380 coordinates L-serine.

This sequence belongs to the class-II aminoacyl-tRNA synthetase family. Type-1 seryl-tRNA synthetase subfamily. Homodimer. The tRNA molecule binds across the dimer.

It is found in the cytoplasm. It catalyses the reaction tRNA(Ser) + L-serine + ATP = L-seryl-tRNA(Ser) + AMP + diphosphate + H(+). The enzyme catalyses tRNA(Sec) + L-serine + ATP = L-seryl-tRNA(Sec) + AMP + diphosphate + H(+). Its pathway is aminoacyl-tRNA biosynthesis; selenocysteinyl-tRNA(Sec) biosynthesis; L-seryl-tRNA(Sec) from L-serine and tRNA(Sec): step 1/1. Its function is as follows. Catalyzes the attachment of serine to tRNA(Ser). Is also able to aminoacylate tRNA(Sec) with serine, to form the misacylated tRNA L-seryl-tRNA(Sec), which will be further converted into selenocysteinyl-tRNA(Sec). This Clavibacter michiganensis subsp. michiganensis (strain NCPPB 382) protein is Serine--tRNA ligase.